The chain runs to 100 residues: Small ribosomal subunit protein uS14c (100 aa).

The protein belongs to the universal ribosomal protein uS14 family. Part of the 30S ribosomal subunit.

The protein localises to the plastid. It is found in the chloroplast. Functionally, binds 16S rRNA, required for the assembly of 30S particles. The sequence is that of Small ribosomal subunit protein uS14c from Nymphaea alba (White water-lily).